We begin with the raw amino-acid sequence, 357 residues long: Phosphoserine aminotransferase (357 aa).

Position 41 (Arg-41) interacts with L-glutamate. Residues 75–76 (GT), Trp-100, Thr-150, Asp-170, and Gln-193 each bind pyridoxal 5'-phosphate. Lys-194 is subject to N6-(pyridoxal phosphate)lysine. Position 234–235 (234–235 (NT)) interacts with pyridoxal 5'-phosphate.

Belongs to the class-V pyridoxal-phosphate-dependent aminotransferase family. SerC subfamily. In terms of assembly, homodimer. The cofactor is pyridoxal 5'-phosphate.

The protein resides in the cytoplasm. It catalyses the reaction O-phospho-L-serine + 2-oxoglutarate = 3-phosphooxypyruvate + L-glutamate. The catalysed reaction is 4-(phosphooxy)-L-threonine + 2-oxoglutarate = (R)-3-hydroxy-2-oxo-4-phosphooxybutanoate + L-glutamate. It participates in amino-acid biosynthesis; L-serine biosynthesis; L-serine from 3-phospho-D-glycerate: step 2/3. Catalyzes the reversible conversion of 3-phosphohydroxypyruvate to phosphoserine and of 3-hydroxy-2-oxo-4-phosphonooxybutanoate to phosphohydroxythreonine. In Lactiplantibacillus plantarum (strain ATCC BAA-793 / NCIMB 8826 / WCFS1) (Lactobacillus plantarum), this protein is Phosphoserine aminotransferase.